The following is a 122-amino-acid chain: Autophagy-related protein 8e (122 aa).

Gly118 is lipidated: Phosphatidylethanolamine amidated glycine. Positions 119–122 (ASSI) are cleaved as a propeptide — removed in mature form.

Belongs to the ATG8 family. Interacts with ATG4. Interacts with SH3P2. Interacts with ATG1A and ATG11. Binds to ATG1A and ATG11 on autophagic vesicles. In terms of processing, the C-terminal 4 residues are removed by ATG4 to expose Gly-118 at the C-terminus. This Gly-118 forms then a thioester bond with the 'Cys-558' of ATG7 (E1-like activating enzyme) before being transferred to the 'Cys-258' of ATG3 (the specific E2 conjugating enzyme), in order to be finally amidated with phosphatidylethanolamine. This lipid modification anchors ATG8 to autophagosomes. Constitutively expressed.

The protein localises to the cytoplasmic vesicle. It localises to the autophagosome membrane. Its subcellular location is the vacuole membrane. It is found in the cytoplasm. The protein resides in the cytoskeleton. Ubiquitin-like modifier involved in autophagosomes formation. May mediate the delivery of the autophagosomes to the vacuole via the microtubule cytoskeleton. The polypeptide is Autophagy-related protein 8e (ATG8E) (Arabidopsis thaliana (Mouse-ear cress)).